A 161-amino-acid polypeptide reads, in one-letter code: Putative pre-16S rRNA nuclease (161 aa).

This sequence belongs to the YqgF nuclease family.

Its subcellular location is the cytoplasm. Its function is as follows. Could be a nuclease involved in processing of the 5'-end of pre-16S rRNA. The polypeptide is Putative pre-16S rRNA nuclease (Methylocella silvestris (strain DSM 15510 / CIP 108128 / LMG 27833 / NCIMB 13906 / BL2)).